A 358-amino-acid polypeptide reads, in one-letter code: Neutral protease 2 homolog MEP8 (358 aa).

The signal sequence occupies residues 1-19; sequence MKLSSILLALAALVSPAFS. Residues 20-179 constitute a propeptide that is removed on maturation; the sequence is YAISHLPRSE…EKAIKPVDKR (160 aa). Disulfide bonds link C186–C256 and C263–C281. Residue H305 participates in Zn(2+) binding. The active site involves E306. The Zn(2+) site is built by H309 and D320.

This sequence belongs to the peptidase M35 family. Zn(2+) is required as a cofactor.

It localises to the secreted. It carries out the reaction Preferential cleavage of bonds with hydrophobic residues in P1'. Also 3-Asn-|-Gln-4 and 8-Gly-|-Ser-9 bonds in insulin B chain.. In terms of biological role, secreted metalloproteinase that allows assimilation of proteinaceous substrates. Shows high activities on basic nuclear substrates such as histone and protamine. May be involved in virulence. This chain is Neutral protease 2 homolog MEP8 (MEP8), found in Coccidioides posadasii (strain C735) (Valley fever fungus).